Consider the following 218-residue polypeptide: Cytochrome b6 (218 aa).

The helical transmembrane segment at 35–55 threads the bilayer; that stretch reads IFYCLGGITLVCFLIQFATGF. Cys-38 lines the heme c pocket. Heme b contacts are provided by His-89 and His-103. The next 3 membrane-spanning stretches (helical) occupy residues 93–113, 119–139, and 189–209; these read ASMM…TGGF, LTWV…VTGY, and LHTF…FLMI. Positions 190 and 205 each coordinate heme b.

This sequence belongs to the cytochrome b family. PetB subfamily. In terms of assembly, the 4 large subunits of the cytochrome b6-f complex are cytochrome b6, subunit IV (17 kDa polypeptide, PetD), cytochrome f and the Rieske protein, while the 4 small subunits are PetG, PetL, PetM and PetN. The complex functions as a dimer. Requires heme b as cofactor. It depends on heme c as a cofactor.

Its subcellular location is the cellular thylakoid membrane. In terms of biological role, component of the cytochrome b6-f complex, which mediates electron transfer between photosystem II (PSII) and photosystem I (PSI), cyclic electron flow around PSI, and state transitions. The sequence is that of Cytochrome b6 from Synechococcus sp. (strain WH7803).